The primary structure comprises 185 residues: MAAQKDQQKDAEAEGLSATTLLPKLIPSGAGREWLERRRATIRPWGSFVDQRRFSRPRNLGELCQRLVRNVEYYQSNYVFVFLGLILYCVVTSPMLLVALAVFFGACYILYLRTLQSKFVLFGREVSPAHQYALAGGVSFPFFWLAGAGSAVFWVLGATLVVIGSHAAFHQIEAVDGEELQMEPV.

Topologically, residues 1–78 (MAAQKDQQKD…RNVEYYQSNY (78 aa)) are cytoplasmic. Positions 30-54 (AGREWLERRRATIRPWGSFVDQRRF) are required for interaction with prenylated RAB3A and VAMP2. 2 consecutive transmembrane segments (helical) span residues 79-94 (VFVFLGLILYCVVTSP) and 95-112 (MLLVALAVFFGACYILYL). The Cytoplasmic segment spans residues 113–131 (RTLQSKFVLFGREVSPAHQ). A run of 2 helical transmembrane segments spans residues 132 to 148 (YALAGGVSFPFFWLAGA) and 149 to 165 (GSAVFWVLGATLVVIGS). The tract at residues 165 to 185 (SHAAFHQIEAVDGEELQMEPV) is required for interaction with GDI1. At 166-185 (HAAFHQIEAVDGEELQMEPV) the chain is on the cytoplasmic side. Positions 175 to 185 (VDGEELQMEPV) are required for interaction with prenylated RAB3A and VAMP2. The interval 175-185 (VDGEELQMEPV) is homodimerization.

Belongs to the PRA1 family. As to quaternary structure, homodimer. Interacts with VAMP2 (synaptobrevin-2), prenylated Rab proteins, GDI1, NRDG1 and PCLO.

The protein localises to the cell membrane. The protein resides in the cytoplasm. Its subcellular location is the golgi apparatus. It is found in the cytoplasmic vesicle. It localises to the secretory vesicle. The protein localises to the synaptic vesicle. Functionally, general Rab protein regulator required for vesicle formation from the Golgi complex. May control vesicle docking and fusion by mediating the action of Rab GTPases to the SNARE complexes. In addition it inhibits the removal of Rab GTPases from the membrane by GDI1. In Sus scrofa (Pig), this protein is Prenylated Rab acceptor protein 1 (RABAC1).